Reading from the N-terminus, the 89-residue chain is Small ribosomal subunit protein uS15 (89 aa).

It belongs to the universal ribosomal protein uS15 family. As to quaternary structure, part of the 30S ribosomal subunit. Forms a bridge to the 50S subunit in the 70S ribosome, contacting the 23S rRNA.

Its function is as follows. One of the primary rRNA binding proteins, it binds directly to 16S rRNA where it helps nucleate assembly of the platform of the 30S subunit by binding and bridging several RNA helices of the 16S rRNA. Functionally, forms an intersubunit bridge (bridge B4) with the 23S rRNA of the 50S subunit in the ribosome. The sequence is that of Small ribosomal subunit protein uS15 from Buchnera aphidicola subsp. Acyrthosiphon pisum (strain 5A).